The primary structure comprises 209 residues: Large ribosomal subunit protein uL3 (209 aa).

The disordered stretch occupies residues 127–152 (SGGPSSHGSKFHRHLGSTGQAATPSR). Positions 143-152 (STGQAATPSR) are enriched in polar residues.

It belongs to the universal ribosomal protein uL3 family. Part of the 50S ribosomal subunit. Forms a cluster with proteins L14 and L19.

In terms of biological role, one of the primary rRNA binding proteins, it binds directly near the 3'-end of the 23S rRNA, where it nucleates assembly of the 50S subunit. In Borrelia hermsii (strain HS1 / DAH), this protein is Large ribosomal subunit protein uL3.